The primary structure comprises 221 residues: NADH-ubiquinone oxidoreductase chain 6 (221 aa).

Transmembrane regions (helical) follow at residues 18–38 (FVEY…IYVI), 44–64 (IVSV…LNII), 74–94 (IIVY…LINI), 107–127 (IPLT…MLPY), and 195–215 (IWLI…IVIT).

This sequence belongs to the complex I subunit 6 family.

The protein localises to the mitochondrion membrane. It catalyses the reaction a ubiquinone + NADH + 5 H(+)(in) = a ubiquinol + NAD(+) + 4 H(+)(out). In terms of biological role, core subunit of the mitochondrial membrane respiratory chain NADH dehydrogenase (Complex I) that is believed to belong to the minimal assembly required for catalysis. Complex I functions in the transfer of electrons from NADH to the respiratory chain. The immediate electron acceptor for the enzyme is believed to be ubiquinone. The polypeptide is NADH-ubiquinone oxidoreductase chain 6 (ND6) (Podospora anserina (strain S / ATCC MYA-4624 / DSM 980 / FGSC 10383) (Pleurage anserina)).